The chain runs to 194 residues: Putative 3-methyladenine DNA glycosylase (194 aa).

It belongs to the DNA glycosylase MPG family.

The sequence is that of Putative 3-methyladenine DNA glycosylase from Chlamydia felis (strain Fe/C-56) (Chlamydophila felis).